The primary structure comprises 208 residues: CD209 antigen-like protein E (208 aa).

Residues 1–16 are Cytoplasmic-facing; sequence MRAPQMGSLGFLDKGH. A helical; Signal-anchor for type II membrane protein membrane pass occupies residues 17-37; that stretch reads IPLVLQLLFLILFTGLLVAII. Residues 38-208 lie on the Extracellular side of the membrane; that stretch reads IQVSKMPSSE…KIATTCLSKW (171 aa). Disulfide bonds link Cys77–Cys88, Cys105–Cys197, and Cys176–Cys189. The 116-residue stretch at 83-198 folds into the C-type lectin domain; it reads FFNGNCYFFS…CEQRKFWICK (116 aa).

The protein localises to the membrane. Its function is as follows. Putative pathogen-recognition receptor. May mediate the endocytosis of pathogens which are subsequently degraded in lysosomal compartments. The protein is CD209 antigen-like protein E (Cd209e) of Mus musculus (Mouse).